A 316-amino-acid chain; its full sequence is Apolipoprotein E (316 aa).

The signal sequence occupies residues 1 to 18; the sequence is MKALWAVLVVTLLAGCLA. 8 tandem repeats follow at residues 76–97, 98–119, 120–141, 142–163, 164–185, 186–207, 208–229, and 230–251. Positions 76–251 are 8 X 22 AA approximate tandem repeats; that stretch reads VLMEDTMTEL…RLEEVREQME (176 aa). M139 is modified (methionine sulfoxide). S143 carries the post-translational modification Phosphoserine. Residues 154-164 form an LDL and other lipoprotein receptors binding region; that stretch reads HLRKLRKRLMR. Position 158–161 (158–161) interacts with heparin; that stretch reads LRKR. The interval 206–286 is lipid-binding and lipoprotein association; it reads TANLGAGAAQ…GWFEPLVEDM (81 aa). Residue 225–232 participates in heparin binding; the sequence is GARIRGRL. The interval 262–316 is homooligomerization; the sequence is QQMRLQAEIFQTRLKGWFEPLVEDMQRQWANLMEKIQASVATNPIPPSSVPQESQ. A specificity for association with VLDL region spans residues 274–286; it reads RLKGWFEPLVEDM.

Belongs to the apolipoprotein A1/A4/E family. In terms of assembly, homotetramer. May interact with ABCA1; functionally associated with ABCA1 in the biogenesis of HDLs. May interact with APP/A4 amyloid-beta peptide; the interaction is extremely stable in vitro but its physiological significance is unclear. May interact with MAPT. May interact with MAP2. In the cerebrospinal fluid, interacts with secreted SORL1. Interacts with PMEL; this allows the loading of PMEL luminal fragment on ILVs to induce fibril nucleation. In terms of processing, APOE exists as multiple glycosylated and sialylated glycoforms within cells and in plasma. The extent of glycosylation and sialylation are tissue and context specific. Post-translationally, glycated in plasma VLDL. Phosphorylated by FAM20C in the extracellular medium.

The protein localises to the secreted. It is found in the extracellular space. It localises to the extracellular matrix. Its subcellular location is the extracellular vesicle. The protein resides in the endosome. The protein localises to the multivesicular body. In terms of biological role, APOE is an apolipoprotein, a protein associating with lipid particles, that mainly functions in lipoprotein-mediated lipid transport between organs via the plasma and interstitial fluids. APOE is a core component of plasma lipoproteins and is involved in their production, conversion and clearance. Apolipoproteins are amphipathic molecules that interact both with lipids of the lipoprotein particle core and the aqueous environment of the plasma. As such, APOE associates with chylomicrons, chylomicron remnants, very low density lipoproteins (VLDL) and intermediate density lipoproteins (IDL) but shows a preferential binding to high-density lipoproteins (HDL). It also binds a wide range of cellular receptors including the LDL receptor/LDLR, the LDL receptor-related proteins LRP1, LRP2 and LRP8 and the very low-density lipoprotein receptor/VLDLR that mediate the cellular uptake of the APOE-containing lipoprotein particles. Finally, APOE also has a heparin-binding activity and binds heparan-sulfate proteoglycans on the surface of cells, a property that supports the capture and the receptor-mediated uptake of APOE-containing lipoproteins by cells. A main function of APOE is to mediate lipoprotein clearance through the uptake of chylomicrons, VLDLs, and HDLs by hepatocytes. APOE is also involved in the biosynthesis by the liver of VLDLs as well as their uptake by peripheral tissues ensuring the delivery of triglycerides and energy storage in muscle, heart and adipose tissues. By participating in the lipoprotein-mediated distribution of lipids among tissues, APOE plays a critical role in plasma and tissues lipid homeostasis. APOE is also involved in two steps of reverse cholesterol transport, the HDLs-mediated transport of cholesterol from peripheral tissues to the liver, and thereby plays an important role in cholesterol homeostasis. First, it is functionally associated with ABCA1 in the biogenesis of HDLs in tissues. Second, it is enriched in circulating HDLs and mediates their uptake by hepatocytes. APOE also plays an important role in lipid transport in the central nervous system, regulating neuron survival and sprouting. The polypeptide is Apolipoprotein E (APOE) (Microtus ochrogaster (Prairie vole)).